The chain runs to 214 residues: Potassium-transporting ATPase KdpC subunit (214 aa).

Residues 17-37 form a helical membrane-spanning segment; that stretch reads LWVITALIYPFSMIAIGQILF.

It belongs to the KdpC family. The system is composed of three essential subunits: KdpA, KdpB and KdpC.

The protein localises to the cell inner membrane. Part of the high-affinity ATP-driven potassium transport (or Kdp) system, which catalyzes the hydrolysis of ATP coupled with the electrogenic transport of potassium into the cytoplasm. This subunit acts as a catalytic chaperone that increases the ATP-binding affinity of the ATP-hydrolyzing subunit KdpB by the formation of a transient KdpB/KdpC/ATP ternary complex. This Microcystis aeruginosa (strain NIES-843 / IAM M-2473) protein is Potassium-transporting ATPase KdpC subunit.